Consider the following 262-residue polypeptide: Undecaprenyl-diphosphatase (262 aa).

Helical transmembrane passes span 15-35 (LTEW…IILL), 38-58 (SSAA…IVAF), 91-111 (LYIL…AKYV), 114-134 (IFGS…LLYS), 149-169 (ALIV…RSGA), 189-209 (FLLS…VSPA), 219-239 (VGLL…LSII), and 242-262 (GRLH…LSLL).

Belongs to the UppP family.

The protein resides in the cell membrane. The enzyme catalyses di-trans,octa-cis-undecaprenyl diphosphate + H2O = di-trans,octa-cis-undecaprenyl phosphate + phosphate + H(+). Its function is as follows. Catalyzes the dephosphorylation of undecaprenyl diphosphate (UPP). In Korarchaeum cryptofilum (strain OPF8), this protein is Undecaprenyl-diphosphatase.